The sequence spans 549 residues: Chaperonin GroEL (549 aa).

Residues 30-33 (TLGP), Lys51, 87-91 (DGTTT), Gly415, and Asp496 contribute to the ATP site.

The protein belongs to the chaperonin (HSP60) family. Forms a cylinder of 14 subunits composed of two heptameric rings stacked back-to-back. Interacts with the co-chaperonin GroES.

It is found in the cytoplasm. The enzyme catalyses ATP + H2O + a folded polypeptide = ADP + phosphate + an unfolded polypeptide.. Functionally, together with its co-chaperonin GroES, plays an essential role in assisting protein folding. The GroEL-GroES system forms a nano-cage that allows encapsulation of the non-native substrate proteins and provides a physical environment optimized to promote and accelerate protein folding. The sequence is that of Chaperonin GroEL from Prosthecochloris aestuarii (strain DSM 271 / SK 413).